The sequence spans 486 residues: Glutamyl-tRNA(Gln) amidotransferase subunit A (486 aa).

Residues Lys-74 and Ser-149 each act as charge relay system in the active site. Ser-173 functions as the Acyl-ester intermediate in the catalytic mechanism.

The protein belongs to the amidase family. GatA subfamily. In terms of assembly, heterotrimer of A, B and C subunits.

The catalysed reaction is L-glutamyl-tRNA(Gln) + L-glutamine + ATP + H2O = L-glutaminyl-tRNA(Gln) + L-glutamate + ADP + phosphate + H(+). Its function is as follows. Allows the formation of correctly charged Gln-tRNA(Gln) through the transamidation of misacylated Glu-tRNA(Gln) in organisms which lack glutaminyl-tRNA synthetase. The reaction takes place in the presence of glutamine and ATP through an activated gamma-phospho-Glu-tRNA(Gln). In Prochlorococcus marinus (strain MIT 9303), this protein is Glutamyl-tRNA(Gln) amidotransferase subunit A.